Here is a 590-residue protein sequence, read N- to C-terminus: Melanophilin (590 aa).

Residues 4 to 124 (RLDLSTLTDE…IGSLEWYYQH (121 aa)) enclose the RabBD domain. The FYVE-type zinc finger occupies 64-107 (CARCLQPYRLLLNSRRQCLECSLFVCKSCSHAHPEEQGWLCDPC). Disordered stretches follow at residues 147–182 (GGGG…PLNS), 215–276 (SVPE…AELD), 311–335 (DTSD…ARTV), 361–472 (VLPP…SEIS), and 485–590 (GLTV…AQQP). Over residues 154-172 (SLEEGNGDSEQTDEDGDLD) the composition is skewed to acidic residues. Polar residues predominate over residues 215–238 (SVPESAHSLQSLSGEPYSEDTTSL). The stretch at 339-485 (QILELNKRMS…SRIAALRAAG (147 aa)) forms a coiled coil. The segment covering 391–401 (LTSNISGSSTS) has biased composition (low complexity). Basic and acidic residues predominate over residues 424–433 (GHMETQERNP).

Binds RAB27A that has been activated by GTP-binding via its N-terminus. Binds MYO5A via its C-terminal coiled coil domain. As to expression, highly expressed in embryos at day 7; not detectable at day 11. Highly expressed in adult stomach; detected at lower levels in kidney, lung, skin and small intestine. Detected in melanocytes.

It localises to the melanosome. Functionally, rab effector protein involved in melanosome transport. Serves as link between melanosome-bound RAB27A and the motor protein MYO5A. The chain is Melanophilin (Mlph) from Mus musculus (Mouse).